The chain runs to 465 residues: MFTRVANFCRKVLSREESEAEQAVARPHMTIIPREQHAISRKDISENALKVLYRLNKAGYEAYLVGGGVRDLLLGKKPKDFDVTTNATPDQVRKLFRNCRLVGRRFRLAHVMFGPEIIEVATFRGHNEGSESDRTTSQRGQNGMLLRDNIFGSIEEDAQRRDFTINSLYYSVADFTVRDYVGGMQDLQEGVIRLIGNPETRYREDPVRMLRAVRFAAKLNMRISPETAEPIPRLATLLNDIPPARLFEESLKLLQAGNGFETYQQLREYHLFQPLFPTITRYFTENGDSAMERIIAQVLKNTDNRIRNEMRVNPAFLFAAMFWYPLLEMAQKIAQESGLAYYDAFALAMNDVLDEACRSLAIPKRLTTLTRDIWQLQLRMSRRQGKRAWKLMEHPKFRAAFDLLELRAQVENNTELQRLAQWWAEFQASAPPEQKGMLNELDDDPAPRRRRSRPRKRAPRREGTV.

Residues D80, D82, and D162 contribute to the active site. The tract at residues 430–465 is disordered; sequence APPEQKGMLNELDDDPAPRRRRSRPRKRAPRREGTV. Over residues 448 to 459 the composition is skewed to basic residues; it reads RRRRSRPRKRAP.

It belongs to the tRNA nucleotidyltransferase/poly(A) polymerase family.

It carries out the reaction RNA(n) + ATP = RNA(n)-3'-adenine ribonucleotide + diphosphate. Its function is as follows. Adds poly(A) tail to the 3' end of many RNAs, which usually targets these RNAs for decay. Plays a significant role in the global control of gene expression, through influencing the rate of transcript degradation, and in the general RNA quality control. The protein is Poly(A) polymerase I of Salmonella typhi.